Here is a 237-residue protein sequence, read N- to C-terminus: Proteasome subunit beta (237 aa).

Residues 1 to 27 (MSKFPDLPGMKNLDANPYEPELASFDD) are disordered. Residues 1-42 (MSKFPDLPGMKNLDANPYEPELASFDDMDADAGDGDAVAKTG) constitute a propeptide, removed in mature form; by autocatalysis. Catalysis depends on Thr43, which acts as the Nucleophile.

This sequence belongs to the peptidase T1B family. The 20S proteasome core is composed of 14 alpha and 14 beta subunits that assemble into four stacked heptameric rings, resulting in a barrel-shaped structure. The two inner rings, each composed of seven catalytic beta subunits, are sandwiched by two outer rings, each composed of seven alpha subunits. The catalytic chamber with the active sites is on the inside of the barrel. Has a gated structure, the ends of the cylinder being occluded by the N-termini of the alpha-subunits. Is capped at one or both ends by the proteasome regulatory ATPase, PAN.

It is found in the cytoplasm. The catalysed reaction is Cleavage of peptide bonds with very broad specificity.. Its activity is regulated as follows. The formation of the proteasomal ATPase PAN-20S proteasome complex, via the docking of the C-termini of PAN into the intersubunit pockets in the alpha-rings, triggers opening of the gate for substrate entry. Interconversion between the open-gate and close-gate conformations leads to a dynamic regulation of the 20S proteasome proteolysis activity. Functionally, component of the proteasome core, a large protease complex with broad specificity involved in protein degradation. This chain is Proteasome subunit beta, found in Halomicrobium mukohataei (strain ATCC 700874 / DSM 12286 / JCM 9738 / NCIMB 13541) (Haloarcula mukohataei).